The following is a 144-amino-acid chain: Acidic phospholipase A2 (144 aa).

Positions 1–19 (MYPAHLLVLLAVCVSLLGA) are cleaved as a signal peptide. A propeptide spanning residues 20 to 27 (SDIPPLPL) is cleaved from the precursor. Disulfide bonds link C38–C98, C54–C143, C56–C72, C71–C125, C78–C118, C87–C111, and C105–C116. Residues Y55, G57, and G59 each coordinate Ca(2+). Residue H75 is part of the active site. D76 contacts Ca(2+). Residue D119 is part of the active site.

This sequence belongs to the phospholipase A2 family. Group I subfamily. D49 sub-subfamily. Ca(2+) serves as cofactor. In terms of tissue distribution, expressed by the venom gland.

It is found in the secreted. The enzyme catalyses a 1,2-diacyl-sn-glycero-3-phosphocholine + H2O = a 1-acyl-sn-glycero-3-phosphocholine + a fatty acid + H(+). Its function is as follows. PLA2 catalyzes the calcium-dependent hydrolysis of the 2-acyl groups in 3-sn-phosphoglycerides. The chain is Acidic phospholipase A2 from Aipysurus laevis (Olive sea snake).